A 435-amino-acid chain; its full sequence is Glucan 1,3-beta-glucosidase (435 aa).

The first 30 residues, 1-30 (MLFPVLHLPKAMKFSSFSLIASSLLSLVAA), serve as a signal peptide directing secretion. The active-site Proton donor is the Glu222. Disulfide bonds link Cys306–Cys432 and Cys331–Cys357. Catalysis depends on Glu323, which acts as the Nucleophile.

The protein belongs to the glycosyl hydrolase 5 (cellulase A) family.

The protein localises to the secreted. The catalysed reaction is Successive hydrolysis of beta-D-glucose units from the non-reducing ends of (1-&gt;3)-beta-D-glucans, releasing alpha-glucose.. In terms of biological role, beta-glucanases participate in the metabolism of beta-glucan, the main structural component of the cell wall. It could also function biosynthetically as a transglycosylase. This Pichia angusta (Yeast) protein is Glucan 1,3-beta-glucosidase.